Here is a 328-residue protein sequence, read N- to C-terminus: Sin3 histone deacetylase corepressor complex component SDS3 (328 aa).

Residues 1–64 are disordered; the sequence is MSAAALLAPA…TDLAKHDEED (64 aa). N-acetylserine is present on Ser-2. The segment at 2–170 is mediates interaction with USP17L2; it reads SAAALLAPAP…IENEKLTMEL (169 aa). A compositionally biased stretch (pro residues) spans 10-21; it reads APAPAGAPPAPE. Acidic residues-rich tracts occupy residues 23 to 37 and 45 to 54; these read YPEE…EDDE and SDEDTEDASE. Phosphoserine occurs at positions 32 and 45. Phosphothreonine is present on Thr-49. Ser-53 carries the phosphoserine modification. Residues 64–171 are a coiled coil; sequence DFVEMKEQMY…ENEKLTMELT (108 aa). Residues Lys-69, Lys-178, and Lys-201 each participate in a glycyl lysine isopeptide (Lys-Gly) (interchain with G-Cter in SUMO2) cross-link. Residues 226–252 are disordered; the sequence is LKSPKRPASPSSPEHLPTTPAESPAQR. Ser-228, Ser-234, and Ser-237 each carry phosphoserine. Thr-244 is subject to Phosphothreonine.

Belongs to the SDS3 family. Homodimer. Component of the SIN3 histone deacetylase (HDAC) corepressor complex. Interacts with SIN3A. Interaction with SIN3B enhances the interaction between SIN3B and HDAC1 to form a complex. Interacts with HCFC1. Component of a mSin3A corepressor complex that contains SIN3A, SAP130, SUDS3/SAP45, ARID4B/SAP180, HDAC1 and HDAC2. Interacts with USP17L2; the interaction is direct. Interacts with FOXK2. Polyubiquitinated. 'Lys-63'-polyubiquitinated SUDS3 positively regulates histone deacetylation. Regulated through deubiquitination by USP17L2/USP17 that cleaves 'Lys-63'-linked ubiquitin chains.

The protein resides in the nucleus. Its function is as follows. Regulatory protein which represses transcription and augments histone deacetylase activity of HDAC1. May have a potential role in tumor suppressor pathways through regulation of apoptosis. May function in the assembly and/or enzymatic activity of the mSin3A corepressor complex or in mediating interactions between the complex and other regulatory complexes. The protein is Sin3 histone deacetylase corepressor complex component SDS3 (SUDS3) of Bos taurus (Bovine).